Reading from the N-terminus, the 378-residue chain is MDYDRIRPVRFLTGVLKWWRLWPRKESVSTPDWTNWQAYALHVPFTFLFVLLLWLEAIKSRDIQHTADVLLICLTTTALGGKVINIWKYAHVAQGILSEWSTWDLFELRSKQEVDMWRFEHRRFNRVFMFYCLCSAGVIPFIVIQPLFDIPNRLPFWMWTPFDWQQPVLFWYAFIYQATTIPIACACNVTMDAVNWYLMLHLSLCLRMLGQRLSKLQHDDKDLREKFLELIHLHQRLKQQALSIEIFISKSTFTQILVSSLIICFTIYSMQMSPVLQDLPGFAAMMQYLVAMIMQVMLPTIYGNAVIDSANMLTDSMYNSDWPDMNCRMRRLVLMFMVYLNRPVTLKAGGFFHIGLPLFTKTMNQAYSLLALLLNMNQ.

Residues 1-37 are Cytoplasmic-facing; sequence MDYDRIRPVRFLTGVLKWWRLWPRKESVSTPDWTNWQ. A helical membrane pass occupies residues 38-58; the sequence is AYALHVPFTFLFVLLLWLEAI. The Extracellular segment spans residues 59–66; that stretch reads KSRDIQHT. The chain crosses the membrane as a helical span at residues 67-87; it reads ADVLLICLTTTALGGKVINIW. Residues 88 to 127 are Cytoplasmic-facing; the sequence is KYAHVAQGILSEWSTWDLFELRSKQEVDMWRFEHRRFNRV. Residues 128 to 148 form a helical membrane-spanning segment; it reads FMFYCLCSAGVIPFIVIQPLF. Residues 149–166 lie on the Extracellular side of the membrane; sequence DIPNRLPFWMWTPFDWQQ. Residues 167–187 traverse the membrane as a helical segment; the sequence is PVLFWYAFIYQATTIPIACAC. The Cytoplasmic portion of the chain corresponds to 188–255; sequence NVTMDAVNWY…IFISKSTFTQ (68 aa). Residues 256 to 276 traverse the membrane as a helical segment; that stretch reads ILVSSLIICFTIYSMQMSPVL. The Extracellular portion of the chain corresponds to 277–280; the sequence is QDLP. Residues 281-301 traverse the membrane as a helical segment; that stretch reads GFAAMMQYLVAMIMQVMLPTI. Topologically, residues 302–343 are cytoplasmic; it reads YGNAVIDSANMLTDSMYNSDWPDMNCRMRRLVLMFMVYLNRP. Residues 344 to 364 form a helical membrane-spanning segment; the sequence is VTLKAGGFFHIGLPLFTKTMN. At 365-378 the chain is on the extracellular side; that stretch reads QAYSLLALLLNMNQ.

The protein belongs to the insect chemoreceptor superfamily. Heteromeric odorant receptor channel (TC 1.A.69) family. Or2a subfamily. In terms of assembly, interacts with Orco. Complexes exist early in the endomembrane system in olfactory sensory neurons (OSNs), coupling these complexes to the conserved ciliary trafficking pathway. Expressed in olfactory sensory neurons in the maxillary palp.

Its subcellular location is the cell membrane. In terms of biological role, odorant receptor which mediates acceptance or avoidance behavior, depending on its substrates. The odorant receptor repertoire encodes a large collection of odor stimuli that vary widely in identity, intensity, and duration. May form a complex with Orco to form odorant-sensing units, providing sensitive and prolonged odorant signaling and calcium permeability. In Drosophila melanogaster (Fruit fly), this protein is Putative odorant receptor 71a (Or71a).